We begin with the raw amino-acid sequence, 169 residues long: NAD(P)H-quinone oxidoreductase subunit J, chloroplastic (169 aa).

Belongs to the complex I 30 kDa subunit family. In terms of assembly, NDH is composed of at least 16 different subunits, 5 of which are encoded in the nucleus.

The protein localises to the plastid. Its subcellular location is the chloroplast thylakoid membrane. The catalysed reaction is a plastoquinone + NADH + (n+1) H(+)(in) = a plastoquinol + NAD(+) + n H(+)(out). The enzyme catalyses a plastoquinone + NADPH + (n+1) H(+)(in) = a plastoquinol + NADP(+) + n H(+)(out). In terms of biological role, NDH shuttles electrons from NAD(P)H:plastoquinone, via FMN and iron-sulfur (Fe-S) centers, to quinones in the photosynthetic chain and possibly in a chloroplast respiratory chain. The immediate electron acceptor for the enzyme in this species is believed to be plastoquinone. Couples the redox reaction to proton translocation, and thus conserves the redox energy in a proton gradient. The chain is NAD(P)H-quinone oxidoreductase subunit J, chloroplastic from Marchantia polymorpha (Common liverwort).